Here is a 138-residue protein sequence, read N- to C-terminus: Thioredoxin H2-1 (138 aa).

The interval 1 to 20 (MGGAFSTSKPKPAAGEEGGE) is disordered. Positions 12–129 (PAAGEEGGES…LEKTINTLRS (118 aa)) constitute a Thioredoxin domain. Catalysis depends on nucleophile residues Cys55 and Cys58. Cys55 and Cys58 are joined by a disulfide.

This sequence belongs to the thioredoxin family. Plant H-type subfamily.

The protein resides in the cytoplasm. Functionally, probable thiol-disulfide oxidoreductase that may be involved in the redox regulation of a number of cytosolic enzymes. The chain is Thioredoxin H2-1 from Oryza sativa subsp. japonica (Rice).